The following is a 134-amino-acid chain: Putative F-box protein R638 (134 aa).

The F-box domain occupies 5–52 (NIMNLLNEDCILHILSFLADKDKIQLSLSCKSNLKFLHKTIYDDIYFY).

The polypeptide is Putative F-box protein R638 (Acanthamoeba polyphaga mimivirus (APMV)).